The sequence spans 455 residues: 3-isopropylmalate dehydratase large subunit (455 aa).

Residues Cys-336, Cys-396, and Cys-399 each contribute to the [4Fe-4S] cluster site.

The protein belongs to the aconitase/IPM isomerase family. LeuC type 1 subfamily. In terms of assembly, heterodimer of LeuC and LeuD. [4Fe-4S] cluster serves as cofactor.

It catalyses the reaction (2R,3S)-3-isopropylmalate = (2S)-2-isopropylmalate. The protein operates within amino-acid biosynthesis; L-leucine biosynthesis; L-leucine from 3-methyl-2-oxobutanoate: step 2/4. Its function is as follows. Catalyzes the isomerization between 2-isopropylmalate and 3-isopropylmalate, via the formation of 2-isopropylmaleate. This is 3-isopropylmalate dehydratase large subunit from Staphylococcus aureus (strain MRSA252).